The following is a 357-amino-acid chain: Peptide chain release factor 1 (357 aa).

Position 232 is an N5-methylglutamine (Q232). Positions 284–304 (AERAAERKGQIGSGDRSERIR) are enriched in basic and acidic residues. The tract at residues 284–308 (AERAAERKGQIGSGDRSERIRTYNY) is disordered.

Belongs to the prokaryotic/mitochondrial release factor family. Post-translationally, methylated by PrmC. Methylation increases the termination efficiency of RF1.

Its subcellular location is the cytoplasm. Functionally, peptide chain release factor 1 directs the termination of translation in response to the peptide chain termination codons UAG and UAA. The chain is Peptide chain release factor 1 from Maricaulis maris (strain MCS10) (Caulobacter maris).